The chain runs to 468 residues: Acetyl-CoA decarbonylase/synthase complex subunit gamma (468 aa).

The 4Fe-4S domain maps to 1 to 60 (MKINSPLEAYKYLPQTNCGECGEATCMAFASKLIDRSGKTSDCPPLIKEKKFAKKLAELD). [4Fe-4S] cluster contacts are provided by Cys18, Cys21, Cys26, and Cys43.

Heterodimer of delta and gamma chains. The ACDS complex is made up of alpha, epsilon, beta, gamma and delta chains with a probable stoichiometry of (alpha(2)epsilon(2))(4)-beta(8)-(gamma(1)delta(1))(8). Corrinoid is required as a cofactor. Requires [4Fe-4S] cluster as cofactor.

The catalysed reaction is 5,6,7,8-tetrahydrosarcinapterin + methyl-Co(III)-[corrinoid Fe-S protein] = 5-methyltetrahydrosarcinapterin + Co(I)-[corrinoid Fe-S protein] + H(+). The protein operates within one-carbon metabolism; methanogenesis from acetate. In terms of biological role, part of a complex that catalyzes the reversible cleavage of acetyl-CoA, allowing growth on acetate as sole source of carbon and energy. This chain is Acetyl-CoA decarbonylase/synthase complex subunit gamma, found in Methanosarcina acetivorans (strain ATCC 35395 / DSM 2834 / JCM 12185 / C2A).